Reading from the N-terminus, the 1062-residue chain is MNRFTAYAALFFIFSLCSTAKEAGFQHPAFNFRGTSTMSALSGDYSAAPTPLYKSWALPSSLNLTTQPPPLLTDRSYYELVQALISKMRLDCQTVGDMTWRHLSEMLFASWNSVKEVSLKAASVTLWAIISIWFGLYWTLARLITLFLWTFSIEALCLILLGCITSLIYKGALSLSEHLPVFLFMSPLKIIWRAAFSKRNYKNEKAVEGYKGFSVPQKPPKSAVIELQHENGSHLGYANCIRLYSGENALVTAEHCLEGAFATSLKTGNRIPMSTFFPIFKSARNDISILVGPPNWEGLLSVKGAHFITADKIGKGPASFYTLEKGEWMCHSATIDGAHHQFVSVLCNTGPGYSGTGFWSSKNLLGVLKGFPLEEECNYNVMSVIPSIPGITSPNYVFESTAVKGRVFSDETVKELEREASEAVKKLARFKSLTGKNWANDYDSDEDYGLEKEAATNAPAEKTAQTNSAEKTAPSTSAEKTAPTNKPFKWASGTARQNKRQLRHPRRRYKRTTNGQNGRTDHHSYGGENQSLGDRGEDSEQGVSESPAEAQTKQTRKTWREEQAKQFTSYFDAIYKWGAQEEGCPPGFRKCGNIPGYYHPRTKGETKWGQKLCQVHPELADKTAGFGWPKAGFEAELQSLNLQAARWLQRAESATIPGAEARKRVIEKTVEAYRNCITNAPLCSLKSKLDWAGFQQDIREAVQSLELDAGVGIPYIAYGLPTHRGWVEDHKLLPVLTQLTFDRLQKMSEASFEDMSAEELVQEGLCDPIRLFVKGEPHKQSKLDEGRYRLIMSVSLVDQLVARVLFQNQNKREISLWRSVPSKPGFGLSTDTQTAEFLECLQKVSGAPSVEELCANHKEHTRPTDCSGFDWSVAYWMLEDDMEVRNRLTFNNTQLTERLRAAWLKCIGNSVLCLSDGTLLAQTVPGVQKSGSYNTSSSNSRIRVMAAYHCGADWAMAMGDDALEAPNSDLEEYKTLGFKVEVGRELEFCSHIFRNPTLAVPVNTNKMLYKLIHGYNPECGNPEVIQNYLAAVFSVLQELRHDRELVAKLHQWLVPSATTKEH.

The N-terminal stretch at 1–20 (MNRFTAYAALFFIFSLCSTA) is a signal peptide. 3 consecutive transmembrane segments (helical) span residues 121 to 141 (AASV…WTLA), 144 to 164 (ITLF…LGCI), and 172 to 192 (ALSL…KIIW). One can recognise a Peptidase S39 domain in the interval 207-399 (VEGYKGFSVP…GITSPNYVFE (193 aa)). Catalysis depends on for protease activity residues H255, D286, and S354. The disordered stretch occupies residues 456 to 557 (TNAPAEKTAQ…AEAQTKQTRK (102 aa)). A compositionally biased stretch (polar residues) spans 463-484 (TAQTNSAEKTAPSTSAEKTAPT). Residues 497–511 (QNKRQLRHPRRRYKR) are compositionally biased toward basic residues. The segment covering 541 to 553 (QGVSESPAEAQTK) has biased composition (polar residues). In terms of domain architecture, RdRp catalytic spans 859–974 (EHTRPTDCSG…APNSDLEEYK (116 aa)).

In terms of processing, specific enzymatic cleavages in vivo yield mature proteins. The protease probably cleaves itself and releases the RdRp (Potential). Cleavages have been shown in the P1 protein, but since the N-terminus containing the serine protease is shared between P1 and P1-P2, cleavages should also occur within the P1-P2 protein.

The protein localises to the membrane. It carries out the reaction RNA(n) + a ribonucleoside 5'-triphosphate = RNA(n+1) + diphosphate. Precursor from which the RNA-dependent RNA polymerase (RdRp) is probably released. RNA-dependent RNA polymerase plays an essential role in virus replication (Potential). In Solanum tuberosum (Potato), this protein is Protein P1-P2.